A 587-amino-acid polypeptide reads, in one-letter code: Membrane protein insertase YidC (587 aa).

The next 5 membrane-spanning stretches (helical) occupy residues 5 to 25 (SVIG…FMKP), 365 to 385 (GLII…LSLA), 430 to 450 (LGGC…FYVF), 480 to 500 (LPLY…TVFF), and 516 to 536 (IMIW…PSGL).

The protein belongs to the OXA1/ALB3/YidC family. Type 1 subfamily. In terms of assembly, interacts with the Sec translocase complex via SecD. Specifically interacts with transmembrane segments of nascent integral membrane proteins during membrane integration.

The protein resides in the cell inner membrane. Its function is as follows. Required for the insertion and/or proper folding and/or complex formation of integral membrane proteins into the membrane. Involved in integration of membrane proteins that insert both dependently and independently of the Sec translocase complex, as well as at least some lipoproteins. Aids folding of multispanning membrane proteins. In Chlorobaculum parvum (strain DSM 263 / NCIMB 8327) (Chlorobium vibrioforme subsp. thiosulfatophilum), this protein is Membrane protein insertase YidC.